The chain runs to 246 residues: Probable transcriptional regulatory protein YebC (246 aa).

The disordered stretch occupies residues 1 to 20 (MAGHSKWANTRHRKAAQDAK).

The protein belongs to the TACO1 family.

The protein resides in the cytoplasm. The protein is Probable transcriptional regulatory protein YebC of Shigella flexneri.